Consider the following 254-residue polypeptide: NH(3)-dependent NAD(+) synthetase (254 aa).

32 to 39 (GISGGIDS) is a binding site for ATP. Asp38 lines the Mg(2+) pocket. Arg113 contributes to the deamido-NAD(+) binding site. Residue Thr133 participates in ATP binding. Position 138 (Glu138) interacts with Mg(2+). Residues Lys146 and Asp153 each contribute to the deamido-NAD(+) site. 2 residues coordinate ATP: Lys162 and Thr184. 244-245 (HK) is a deamido-NAD(+) binding site.

It belongs to the NAD synthetase family. In terms of assembly, homodimer.

It carries out the reaction deamido-NAD(+) + NH4(+) + ATP = AMP + diphosphate + NAD(+) + H(+). The protein operates within cofactor biosynthesis; NAD(+) biosynthesis; NAD(+) from deamido-NAD(+) (ammonia route): step 1/1. Catalyzes the ATP-dependent amidation of deamido-NAD to form NAD. Uses ammonia as a nitrogen source. This chain is NH(3)-dependent NAD(+) synthetase, found in Thermococcus kodakarensis (strain ATCC BAA-918 / JCM 12380 / KOD1) (Pyrococcus kodakaraensis (strain KOD1)).